The chain runs to 175 residues: Co-chaperone protein HscB homolog (175 aa).

Residues Ser-7–Leu-79 enclose the J domain.

The protein belongs to the HscB family. As to quaternary structure, interacts with HscA and stimulates its ATPase activity.

Functionally, co-chaperone involved in the maturation of iron-sulfur cluster-containing proteins. Seems to help targeting proteins to be folded toward HscA. In Burkholderia thailandensis (strain ATCC 700388 / DSM 13276 / CCUG 48851 / CIP 106301 / E264), this protein is Co-chaperone protein HscB homolog.